Consider the following 89-residue polypeptide: uncharacterized protein (89 aa).

This is an uncharacterized protein from Bacillus subtilis (strain 168).